Reading from the N-terminus, the 252-residue chain is Small ribosomal subunit protein eS4 (252 aa).

Residues 43 to 106 (LPLLILVRDM…NKYYRVIPVP (64 aa)) enclose the S4 RNA-binding domain.

It belongs to the eukaryotic ribosomal protein eS4 family.

This chain is Small ribosomal subunit protein eS4, found in Desulfurococcus amylolyticus (strain DSM 18924 / JCM 16383 / VKM B-2413 / 1221n) (Desulfurococcus kamchatkensis).